The primary structure comprises 432 residues: UPF0761 membrane protein Cag_0935 (432 aa).

A run of 6 helical transmembrane segments spans residues 52-72, 108-128, 148-168, 190-210, 220-240, and 254-274; these read LLSI…FEVF, NIPL…LSTV, FTLY…SLAA, LLAL…YMLV, AFAG…WFLF, and ALSV…VVLV.

The protein belongs to the UPF0761 family.

The protein resides in the cell inner membrane. In Chlorobium chlorochromatii (strain CaD3), this protein is UPF0761 membrane protein Cag_0935.